Reading from the N-terminus, the 973-residue chain is MANATIKYTTMDLYGILKSCKCSSDERLTHQSLSGGRFSVTGSKVGEFWRAVADRIESGEPIDISEARQKETPLTLDFDVVDKDCKEPVPDVLVNNIHAAVARWARSSLKPAPEDRDLCGVVLTKPVRQCAKGWKKGFHIQYPKLVLETGVAKNLVVGPALRPICSKVWEAVTGTAKDYLDPLSCTVPWLVYGASKPDEPFAWKIARTLDHAGKTIDFNTAFGDVETPPSWGRPTSDRHREAMVLSIHPAGRSVFFRRYDFTAANPGRVTRLADYSAVMAKLDVARQRKPAWNTDATKAHRLKRVTDLTAMLTADLADDRQTWLNVGFCLWQQTSGSAEGYKVWLSFSKKSDKCDEDECWTIWNNQMRPNSFTEGTLVYLAQKHNPGAYLNWLQVKSTPVNDIGTNVAMAKIMWDYYGHQFVCCGGKTQTWYRFDGLTWVESNQGTDLRSLISAEGGPLRRLLMRQLDAVTAAKARGGRDSGNEDDEEDSATDEDDSNPWDSELRRLDSEVLDTMVKRLRNNLKGIEMTGVKNNVLRECAELFYQPEFGDVIDSDPLLFAFANGIYDFREGCLRDGRPEDKLSRRAPVDFVMFGPIPKARHPDNSPVMRPKRMPGESVQDHARRLAECFEQDDVSASAGTMGKEDVESFSCNPNDFKGPVTKLLAFFASVFPDEGTRRFFLRNAAATFVGGNPDKVVLFWTGTGNNGKTVTQTLFEKMLGCFAVKMSTQTLTGRKPSAGSANPEMARLGGGVRWAVMEEPNSDETINAGTLKSMTGNDSFFARDLYCAGKTTFEIKPMFKLHVICNALPGIKDADQATWNRVRVVPFESTFVTPGTTAPADAKYVFPADTDITRKLDRLTAPLAWYLVYCWACIQNERVKYVPPPKVMEATMAYQKEHDLFRQFVEEMLRKDPDSTLTCDDAYTAFRDWTSANSPHGTVRRPKGQVVKCLEAILGKKTVDGWPGYAVGAEQQE.

Residues 473-502 (AKARGGRDSGNEDDEEDSATDEDDSNPWDS) form a disordered region. Residues 483–498 (NEDDEEDSATDEDDSN) are compositionally biased toward acidic residues. Residues 658–840 (GPVTKLLAFF…FVTPGTTAPA (183 aa)) enclose the SF3 helicase domain. 702-709 (GTGNNGKT) provides a ligand contact to ATP.

In Frog virus 3 (isolate Goorha) (FV-3), this protein is Putative helicase 022R.